Reading from the N-terminus, the 380-residue chain is UDP-N-acetylglucosamine 2-epimerase (380 aa).

This sequence belongs to the UDP-N-acetylglucosamine 2-epimerase family.

The protein resides in the cytoplasm. The catalysed reaction is UDP-N-acetyl-alpha-D-glucosamine = UDP-N-acetyl-alpha-D-mannosamine. Its pathway is cell wall biogenesis; poly(glycerol phosphate) teichoic acid biosynthesis. In terms of biological role, catalyzes the conversion of UDP-N-acetylglucosamine into UDP-N-acetylmannosamine, a precursor of the teichoic acid linkage unit. This chain is UDP-N-acetylglucosamine 2-epimerase (mnaA), found in Bacillus subtilis (strain 168).